Here is a 500-residue protein sequence, read N- to C-terminus: Plasma protease C1 inhibitor (500 aa).

Positions 1–22 (MASRLTLLTLLLLLLAGDRASS) are cleaved as a signal peptide. Over residues 20-31 (ASSNPNATSSSS) the composition is skewed to low complexity. The interval 20 to 43 (ASSNPNATSSSSQDPESLQDRGEG) is disordered. N-linked (GlcNAc...) (complex) asparagine glycosylation is present at Asn25. Thr47 and Thr48 each carry an O-linked (GalNAc...) threonine glycan. Ser64 is a glycosylation site (O-linked (GalNAc...) serine). The segment at 65 to 118 (LPTTNSTTNSATKITANTTDEPTTQPTTEPTTQPTIQPTQPTTQLPTDSPTQPT) is disordered. Residues 67–118 (TTNSTTNSATKITANTTDEPTTQPTTEPTTQPTIQPTQPTTQLPTDSPTQPT) show a composition bias toward low complexity. A glycan (N-linked (GlcNAc...) asparagine) is linked at Asn69. Thr71 carries an O-linked (GalNAc...) threonine glycan. A glycan (N-linked (GlcNAc...) asparagine) is linked at Asn81. O-linked (GalNAc...) threonine glycosylation is found at Thr83, Thr88, Thr92, and Thr96. A run of 7 repeats spans residues 85-88 (EPTT), 89-92 (QPTT), 93-96 (EPTT), 97-100 (QPTI), 101-104 (QPTQ), 105-108 (PTTQ), and 116-119 (QPTT). The 7 X 4 AA tandem repeats of [QE]-P-T-[TQ] stretch occupies residues 85 to 119 (EPTTQPTTEPTTQPTIQPTQPTTQLPTDSPTQPTT). Disulfide bonds link Cys123–Cys428 and Cys130–Cys205. Residues Asn238 and Asn253 are each glycosylated (N-linked (GlcNAc...) (complex) asparagine). An N-linked (GlcNAc...) asparagine; in variant TA glycan is attached at Asn272. N-linked (GlcNAc...) (complex) asparagine glycosylation occurs at Asn352.

This sequence belongs to the serpin family. Interacts with MASP1. In terms of assembly, (Microbial infection) Binds to E.coli stcE which allows localization of SERPING1 to cell membranes thus protecting the bacteria against complement-mediated lysis. In terms of processing, highly glycosylated (49%) with N- and O-glycosylation. O-glycosylated with core 1 or possibly core 8 glycans. N-glycan heterogeneity at Asn-25: Hex5HexNAc4 (minor), dHex1Hex5HexNAc4 (minor), Hex6HexNAc5 (major) and dHex1Hex6HexNAc5 (minor). Cleaved by C1S in vitro. Post-translationally, (Microbial infection) Can be proteolytically cleaved by E.coli stcE.

The protein localises to the secreted. Serine protease inhibitor, which acrs as a regulator of the classical complement pathway. Forms a proteolytically inactive stoichiometric complex with the C1r or C1s proteases. May also regulate blood coagulation, fibrinolysis and the generation of kinins. Very efficient inhibitor of FXIIa. Inhibits chymotrypsin and kallikrein. The chain is Plasma protease C1 inhibitor (SERPING1) from Homo sapiens (Human).